The primary structure comprises 242 residues: Venom nerve growth factor 2 (242 aa).

The N-terminal stretch at 1 to 18 (MSMLCYTLIIAFLIGIWA) is a signal peptide. A propeptide spanning residues 19–125 (APKSEDNVPL…ALNRNIRSKR (107 aa)) is cleaved from the precursor. Positions 46 to 69 (KALKTSRNTDQRHPAPKKAEDQEL) are disordered. Basic and acidic residues predominate over residues 52 to 66 (RNTDQRHPAPKKAED). Cystine bridges form between cysteine 139–cysteine 203, cysteine 181–cysteine 231, and cysteine 191–cysteine 233. A glycan (N-linked (GlcNAc...) asparagine) is linked at asparagine 147.

Belongs to the NGF-beta family. In terms of assembly, homodimer; non-covalently linked. As to expression, expressed by the venom gland.

It is found in the secreted. Functionally, nerve growth factor is important for the development and maintenance of the sympathetic and sensory nervous systems. It stimulates division and differentiation of sympathetic and embryonic sensory neurons as well as basal forebrain cholinergic neurons in the brain. Its relevance in the snake venom is not clear. However, it has been shown to inhibit metalloproteinase-dependent proteolysis of platelet glycoprotein Ib alpha, suggesting a metalloproteinase inhibition to prevent metalloprotease autodigestion and/or protection against prey proteases. Binds a lipid between the two protein chains in the homodimer. The lipid-bound form promotes histamine relase from mouse mast cells, contrary to the lipid-free form. In Demansia vestigiata (Lesser black whip snake), this protein is Venom nerve growth factor 2.